Reading from the N-terminus, the 144-residue chain is Glutamyl-tRNA(Gln) amidotransferase subunit C, mitochondrial (144 aa).

The N-terminal 17 residues, 1–17, are a transit peptide targeting the mitochondrion; sequence MFRRSVSFVRSHVLRSF.

This sequence belongs to the GatC family. In terms of assembly, subunit of the heterotrimeric GatCAB amidotransferase (AdT) complex, composed of A, B and C subunits.

The protein resides in the mitochondrion. It carries out the reaction L-glutamyl-tRNA(Gln) + L-glutamine + ATP + H2O = L-glutaminyl-tRNA(Gln) + L-glutamate + ADP + phosphate + H(+). Functionally, allows the formation of correctly charged Gln-tRNA(Gln) through the transamidation of misacylated Glu-tRNA(Gln) in the mitochondria. The reaction takes place in the presence of glutamine and ATP through an activated gamma-phospho-Glu-tRNA(Gln). The polypeptide is Glutamyl-tRNA(Gln) amidotransferase subunit C, mitochondrial (Ixodes scapularis (Black-legged tick)).